Here is a 186-residue protein sequence, read N- to C-terminus: Methylamine dehydrogenase light chain (186 aa).

Residues 1-57 (MLGKSQFDDLFEKMSRKVAGHTSRRGFIGRVGTAVAGVALVPLLPVDRRGRVSRANA) constitute a signal peptide (tat-type signal). Disulfide bonds link Cys78–Cys143, Cys84–Cys116, Cys91–Cys176, Cys93–Cys141, Cys101–Cys132, and Cys133–Cys164. Trp112 is subject to Tryptophylquinone. Positions 112–163 (WVASCYNPTDKQSYLISYRDCCGANVSGRCACLNTEGELPVYRPEFGNDIIW) form a cross-link, tryptophan tryptophylquinone (Trp-Trp).

It belongs to the aromatic amine dehydrogenase light chain family. As to quaternary structure, heterotetramer of two light and two heavy chains. It depends on tryptophan tryptophylquinone residue as a cofactor. Predicted to be exported by the Tat system. The position of the signal peptide cleavage has been experimentally proven. Post-translationally, tryptophan tryptophylquinone (TTQ) is formed by oxidation of the indole ring of a tryptophan to form tryptophylquinone followed by covalent cross-linking with another tryptophan residue.

The protein localises to the periplasm. It catalyses the reaction 2 oxidized [amicyanin] + methylamine + H2O = 2 reduced [amicyanin] + formaldehyde + NH4(+) + 2 H(+). Its pathway is one-carbon metabolism; methylamine degradation; formaldehyde from methylamine: step 1/1. Methylamine dehydrogenase carries out the oxidation of methylamine. Electrons are passed from methylamine dehydrogenase to amicyanin. The sequence is that of Methylamine dehydrogenase light chain (mauA) from Methylorubrum extorquens (strain ATCC 14718 / DSM 1338 / JCM 2805 / NCIMB 9133 / AM1) (Methylobacterium extorquens).